The following is a 260-amino-acid chain: MDYYSLKMRASQHVGEGENSHEQHISGAERIVGRDSVEAVCAAMVRRAMNHSKGDPDFINVKIEKVHESDIQVLKSLPVTRVDVETWQEGLEKAFGLITPLMALRQAQGPCDGAKKFKEKLQDLLRETFPMRGAMLYDIATGNRLEPDKDRGVRATYMDALHSSEVDGCKNHFNEAIVLATKVANAPGMVAEFCVSDDPNYVTGYVASKELGYVRIMKMKEMGDENGGRIFLFDSRKASAEECIEYLQKKKVLVDVVGRT.

The protein belongs to the BioW family. Homodimer. Mg(2+) is required as a cofactor.

The enzyme catalyses heptanedioate + ATP + CoA = 6-carboxyhexanoyl-CoA + AMP + diphosphate. The protein operates within metabolic intermediate metabolism; pimeloyl-CoA biosynthesis; pimeloyl-CoA from pimelate: step 1/1. Its function is as follows. Catalyzes the transformation of pimelate into pimeloyl-CoA with concomitant hydrolysis of ATP to AMP. This Fibrobacter succinogenes (strain ATCC 19169 / S85) protein is 6-carboxyhexanoate--CoA ligase.